An 804-amino-acid polypeptide reads, in one-letter code: Cas scaffolding protein family member 4 (804 aa).

The SH3 domain occupies 11-73 (PKTLLARALY…PANRLQVLRE (63 aa)). Phosphoserine occurs at positions 200 and 297. Disordered stretches follow at residues 369–395 (LERG…DSDR), 607–628 (QRET…TEHS), and 642–686 (QQSP…TERK). Residues 380-390 (PWISGQTSFLS) are compositionally biased toward polar residues. Basic and acidic residues predominate over residues 649 to 664 (EKGKPTMEGKSNRNPD).

It belongs to the CAS family. As to quaternary structure, interacts (via SH3 domain) with PTK2/FAK1 (via C-terminus). Post-translationally, phosphorylated on tyrosines by SRC.

The protein resides in the cytoplasm. It localises to the cytoskeleton. Its subcellular location is the cell junction. The protein localises to the focal adhesion. In terms of biological role, docking protein that plays a role in tyrosine kinase-based signaling related to cell adhesion and cell spreading. Regulates PTK2/FAK1 activity, focal adhesion integrity, and cell spreading. The sequence is that of Cas scaffolding protein family member 4 from Mus musculus (Mouse).